The sequence spans 151 residues: MDMGGNGMAMPPPPAPVKKARYMHMTFFWGKNTEVLFTLWPGARGGMYALAILFMFALAVLLEFRGYRVLEARLARRRAPRAAAALRTAVHAVRVGVAYLIMLALMSFNGGVFLAIVAGHAAGFLAFRAGLCGGGPAPPLEEDRKNDPVCC.

The next 2 helical transmembrane spans lie at 42 to 62 (GARG…AVLL) and 97 to 117 (VAYL…LAIV).

Belongs to the copper transporter (Ctr) (TC 1.A.56) family. SLC31A subfamily. Self-interacts. Interacts with SWEET11 and COPT1.

It is found in the cell membrane. In terms of biological role, involved in the transport of copper, in cooperation with SWEET11 and COPT1. Contributes to the removal of copper (Cu) from xylem, and thus to the sensitivity toward bacterial pathogens such as X.oryzae pv. oryzae (Xoo). The sequence is that of Copper transporter 2 (COPT2) from Oryza sativa subsp. japonica (Rice).